The following is a 166-amino-acid chain: UPF0304 protein VF_1794 (166 aa).

Belongs to the UPF0304 family.

In Aliivibrio fischeri (strain ATCC 700601 / ES114) (Vibrio fischeri), this protein is UPF0304 protein VF_1794.